Consider the following 353-residue polypeptide: Histidinol-phosphate aminotransferase 1 (353 aa).

Lys211 carries the N6-(pyridoxal phosphate)lysine modification.

This sequence belongs to the class-II pyridoxal-phosphate-dependent aminotransferase family. Histidinol-phosphate aminotransferase subfamily. As to quaternary structure, homodimer. The cofactor is pyridoxal 5'-phosphate.

The catalysed reaction is L-histidinol phosphate + 2-oxoglutarate = 3-(imidazol-4-yl)-2-oxopropyl phosphate + L-glutamate. It functions in the pathway amino-acid biosynthesis; L-histidine biosynthesis; L-histidine from 5-phospho-alpha-D-ribose 1-diphosphate: step 7/9. The protein is Histidinol-phosphate aminotransferase 1 (hisC1) of Nostoc sp. (strain PCC 7120 / SAG 25.82 / UTEX 2576).